A 329-amino-acid chain; its full sequence is Sulfate-binding protein (329 aa).

An N-terminal signal peptide occupies residues 1 to 19 (MNKWGVGLTFLLAATSVMA).

It belongs to the prokaryotic sulfate-binding protein family.

The protein resides in the periplasm. Its function is as follows. This protein specifically binds sulfate and is involved in its transmembrane transport. The protein is Sulfate-binding protein (sbp) of Escherichia coli (strain K12).